Here is an 801-residue protein sequence, read N- to C-terminus: MSLLHIAVLLPLIFALIIPFLYRFVKRIHLGWFVLPVPIVLFIYFISLISMTMSGNNVMKNLNWMPHIGMNFNLYVDGLGLLFSLLITGIGSLVVLYSIGYLSKSEQLGNFYCYLLLFMGAMLGVVLSDNFIILYLFWELTSFSSFLLISFWREKKASIYGAQKSLIITVLGGLSMLGGIILLSLATDTFSIQAMISKASDIQNSPFFILVMILFMIGAFTKSAQVPFYIWLPDAMEAPTPVSAYLHSATMVKAGLYLIARITPIFAISEGWVWTITLVGLITLFWASLNATKQHDLKGILAFSTVSQLGMIMSMLGIGAVSYHYQGANSQLYVAGFVAAIFHLINHATFKGALFMITGGIDHSTGTRDVKKLGGLLTIMPISFTLTVITTLSMAGVPPFNGFLSKEKFLESMINVTHLNLMSLNTLGILLPIIAIIGSIFTFVYSIKFILHIFFGSYKPEALPKQAHESSILMLISPIILTSLVIVFGLFPSILTQSIIEPASVAVSQTSNITAEFHLFHGITPAFLSTIGIYIIGILLLISFSYWVRLLQAHPYQLTLNHWYDTSGQRIPGYSENITNSYVTGFSRNNLVIILGILIALTFVTVISVPFSIDFKNVSHLRVFEGATVLFLLIASTFIIFAKSRLFSIIMLSAVGYAISVLFIFFKAPDLALTQFVVESISTALFLLCFYHLPNLNRYNEKPTFKLTNAVISIGVGLSVIILGLIGYGNRHFDSITKFYQEHVFDLAHGKNMVNVILVDFRGMDTLFESSVLGIAGLGVYTMIKLRLKQKNQSSEVNDHE.

20 helical membrane passes run 1–21 (MSLL…IPFL), 30–50 (LGWF…SLIS), 79–99 (LGLL…LYSI), 117–137 (LFMG…LYLF), 166–186 (LIIT…LSLA), 206–226 (PFFI…SAQV), 228–250 (FYIW…HSAT), 265–285 (IFAI…ITLF), 300–320 (ILAF…GIGA), 337–357 (FVAA…LFMI), 373–393 (LGGL…TTLS), 427–447 (LGIL…VYSI), 472–492 (ILML…GLFP), 522–542 (GITP…LLLI), 591–611 (LVII…SVPF), 623–643 (VFEG…IFAK), 646–666 (LFSI…FIFF), 671–691 (LALT…LCFY), 707–727 (LTNA…GLIG), and 764–784 (MDTL…YTMI).

This sequence belongs to the CPA3 antiporters (TC 2.A.63) subunit A family. May form a heterooligomeric complex that consists of seven subunits: mnhA1, mnhB1, mnhC1, mnhD1, mnhE1, mnhF1 and mnhG1.

It localises to the cell membrane. Mnh complex is a Na(+)/H(+) antiporter involved in Na(+) excretion. The protein is Na(+)/H(+) antiporter subunit A1 (mnhA1) of Staphylococcus epidermidis (strain ATCC 35984 / DSM 28319 / BCRC 17069 / CCUG 31568 / BM 3577 / RP62A).